Consider the following 196-residue polypeptide: Pro-FMRFamide-related neuropeptide VF (196 aa).

Residues 1–21 (MEIISLKRFILLMLATSSLLT) form the signal peptide. A propeptide spanning residues 22 to 57 (SNIFCTDESRIPSLYSKKNYDKYSEPRGDLGWEKER) is cleaved from the precursor. At phenylalanine 92 the chain carries Phenylalanine amide. Propeptides lie at residues 95-99 (NMEEE) and 115-121 (NREDSLS). The residue at position 131 (phenylalanine 131) is a Phenylalanine amide. Positions 134–196 (TIAAKSITKT…IDDAELKQEK (63 aa)) are excised as a propeptide.

It belongs to the FARP (FMRFamide related peptide) family. In terms of tissue distribution, expressed in hypothalamus, where it is localized to the dorsomedial hypothalamic nucleus (DMH), paraventricular nucleus (PVN), and to neuronal projections from the PVN to the neurosecretory zone of the median eminence.

It is found in the secreted. May act in concert with kisspeptin, through opposing affects, to regulate the activity of gonadotropin-releasing hormone (GnRH) neurons across the seasons, leading to an annual change in fertility and the cyclical seasonal transition from non-breeding to breeding season. Functionally, efficiently inhibits forskolin-induced production of cAMP. Acts as a potent negative regulator of gonadotropin synthesis and secretion. Induces secretion of prolactin. Its function is as follows. Efficiently inhibits forskolin-induced production of cAMP. Blocks morphine-induced analgesia. In terms of biological role, shows no inhibitory activity of forskolin-induced production of cAMP. The polypeptide is Pro-FMRFamide-related neuropeptide VF (Ovis aries (Sheep)).